The sequence spans 120 residues: cAMP-responsive element-binding protein-like 2 (120 aa).

The tract at residues methionine 1 to isoleucine 24 is disordered. The span at lysine 10–proline 21 shows a compositional bias: basic residues. The 64-residue stretch at lysine 23 to serine 86 folds into the bZIP domain. The interval lysine 29 to arginine 60 is basic motif. The segment at isoleucine 62 to leucine 69 is leucine-zipper. Positions threonine 93 to tryptophan 120 are disordered.

It belongs to the bZIP family. ATF subfamily. Interacts with CREB1; regulates CREB1 phosphorylation, stability and transcriptional activity. Phosphorylated by AMPK.

It localises to the nucleus. Probable regulator of CREB1 transcriptional activity which is involved in adipose cells differentiation. May also play a regulatory role in the cell cycle. Identification in a chromosomal region frequently deleted in various cancers suggests that it might act as a tumor suppressor. The chain is cAMP-responsive element-binding protein-like 2 (CREBL2) from Homo sapiens (Human).